Reading from the N-terminus, the 323-residue chain is Methionyl-tRNA formyltransferase (323 aa).

Residue 113 to 116 coordinates (6S)-5,6,7,8-tetrahydrofolate; it reads SLLP.

It belongs to the Fmt family.

The enzyme catalyses L-methionyl-tRNA(fMet) + (6R)-10-formyltetrahydrofolate = N-formyl-L-methionyl-tRNA(fMet) + (6S)-5,6,7,8-tetrahydrofolate + H(+). Functionally, attaches a formyl group to the free amino group of methionyl-tRNA(fMet). The formyl group appears to play a dual role in the initiator identity of N-formylmethionyl-tRNA by promoting its recognition by IF2 and preventing the misappropriation of this tRNA by the elongation apparatus. In Porphyromonas gingivalis (strain ATCC BAA-308 / W83), this protein is Methionyl-tRNA formyltransferase.